Consider the following 235-residue polypeptide: Peroxisomal membrane protein 11C (235 aa).

The Cytoplasmic portion of the chain corresponds to 1-91 (MSTLETTRAE…LPLVLLGKSK (91 aa)). The chain crosses the membrane as a helical span at residues 92 to 108 (NALLSTFLFLDQIVWLG). The Lumenal segment spans residues 109–206 (RTGIYKDKER…LLQLAPKKVT (98 aa)). Residues 207–226 (PRVTGAFGFASSLISCYQLL) form a helical membrane-spanning segment. Residues 227–235 (PSHPKSKMV) are Cytoplasmic-facing.

The protein belongs to the peroxin-11 family. In terms of assembly, homooligomer. Interacts with ARC5 and FIS1B on peroxisomes. Expressed in roots and developing siliques.

Its subcellular location is the peroxisome membrane. Its function is as follows. Involved in peroxisomal proliferation. Promotes peroxisomal duplication, aggregation or elongation without fission. This is Peroxisomal membrane protein 11C (PEX11C) from Arabidopsis thaliana (Mouse-ear cress).